A 1099-amino-acid chain; its full sequence is Mediator of RNA polymerase II transcription subunit 5 (1099 aa).

Residues 41-66 (DNDDAKTQEGSGSQDKTDVEESISKP) form a disordered region.

Belongs to the Mediator complex subunit 5 family. Component of the Mediator complex.

It is found in the nucleus. Its function is as follows. Component of the Mediator complex, a coactivator involved in the regulated transcription of nearly all RNA polymerase II-dependent genes. Mediator functions as a bridge to convey information from gene-specific regulatory proteins to the basal RNA polymerase II transcription machinery. Mediator is recruited to promoters by direct interactions with regulatory proteins and serves as a scaffold for the assembly of a functional preinitiation complex with RNA polymerase II and the general transcription factors. This is Mediator of RNA polymerase II transcription subunit 5 (NUT1) from Candida glabrata (strain ATCC 2001 / BCRC 20586 / JCM 3761 / NBRC 0622 / NRRL Y-65 / CBS 138) (Yeast).